The chain runs to 788 residues: Endonuclease MutS2 (788 aa).

332–339 (GPNTGGKT) contributes to the ATP binding site. Residues 713 to 788 (VDLRGMDAEE…GTGVTVVEIK (76 aa)) enclose the Smr domain.

It belongs to the DNA mismatch repair MutS family. MutS2 subfamily. Homodimer. Binds to stalled ribosomes, contacting rRNA.

Endonuclease that is involved in the suppression of homologous recombination and thus may have a key role in the control of bacterial genetic diversity. Functionally, acts as a ribosome collision sensor, splitting the ribosome into its 2 subunits. Detects stalled/collided 70S ribosomes which it binds and splits by an ATP-hydrolysis driven conformational change. Acts upstream of the ribosome quality control system (RQC), a ribosome-associated complex that mediates the extraction of incompletely synthesized nascent chains from stalled ribosomes and their subsequent degradation. Probably generates substrates for RQC. The sequence is that of Endonuclease MutS2 from Clostridium botulinum (strain Loch Maree / Type A3).